Reading from the N-terminus, the 98-residue chain is Spermatogenesis-associated protein 45 (98 aa).

The protein belongs to the SPATA45 family.

The protein is Spermatogenesis-associated protein 45 (SPATA45) of Homo sapiens (Human).